Here is a 395-residue protein sequence, read N- to C-terminus: Fractalkine (395 aa).

Residues 1–24 form the signal peptide; sequence MAPSPLAWLLRLAAFFHLCTLLPG. A chemokine and involved in interaction with ITGAV:ITGB3 and ITGA4:ITGB1 region spans residues 25–100; sequence QHLGMTKCEI…HQAAALTKNG (76 aa). The Extracellular portion of the chain corresponds to 25-336; that stretch reads QHLGMTKCEI…TPVPDTQAAT (312 aa). Intrachain disulfides connect C32/C58 and C36/C74. Residues 101–336 are mucin-like stalk; the sequence is GKFEKRVDNV…TPVPDTQAAT (236 aa). Composition is skewed to polar residues over residues 148–172 and 201–210; these read ARGT…TSEA and AVYQSGSSSW. Disordered stretches follow at residues 148–180 and 201–305; these read ARGT…LTAK and AVYQ…SGSQ. The segment covering 218–236 has biased composition (low complexity); it reads SPSTTAPSPQVSTTSPSTP. A helical transmembrane segment spans residues 337–357; that stretch reads RRQAVGLLAFLGLLFCLGVAM. Topologically, residues 358–395 are cytoplasmic; it reads FAYQSLQGCPRKMAGEMVEGLRYVPRSCGSNSYVLVPV.

It belongs to the intercrine delta family. As to quaternary structure, monomer. Forms a ternary complex with CX3CR1 and ITGAV:ITGB3 or ITGA4:ITGB1. Post-translationally, a soluble short 80 kDa form may be released by proteolytic cleavage from the long membrane-anchored form. As to expression, highest levels in brain. Lower levels in kidney, heart and lung. Also found in skeletal muscle and testis. Highly expressed in lesional smooth muscle cells, but not macrophages. Low levels of ABCD-3 mRNA were also found in anti-CD40-stimulated splenic B-cells, but not in resting B-cells. Also expressed in dendritic cells.

It localises to the cell membrane. The protein localises to the secreted. Functionally, chemokine that acts as a ligand for both CX3CR1 and integrins ITGAV:ITGB3 and ITGA4:ITGB1. The CX3CR1-CX3CL1 signaling exerts distinct functions in different tissue compartments, such as immune response, inflammation, cell adhesion and chemotaxis. Regulates leukocyte adhesion and migration processes at the endothelium. Can activate integrins in both a CX3CR1-dependent and CX3CR1-independent manner. In the presence of CX3CR1, activates integrins by binding to the classical ligand-binding site (site 1) in integrins. In the absence of CX3CR1, binds to a second site (site 2) in integrins which is distinct from site 1 and enhances the binding of other integrin ligands to site 1. Its function is as follows. The soluble form is chemotactic for T-cells and monocytes, but not for neutrophils. The membrane-bound form promotes adhesion of those leukocytes to endothelial cells. The polypeptide is Fractalkine (Mus musculus (Mouse)).